We begin with the raw amino-acid sequence, 691 residues long: MARTQAEPPASQPDARAAWLRDQLERANYAYYVLDQPDLPDAEYDRLFRELQQLETDHPELVTPDSPTQRVGGEAAGGFTPVVHDAPMLSLNNGFADEDIVAFDKRVADALAKTTDLAGSVTDPVEYACELKFDGLAISLRYEQGVFVQAATRGDGTTGEDVTENVRTIRSIPLKLKGKHVPAVLDVRGEVLMFKRDFARLNERQRAAEQREFANPRNAAAGSLRQLDSKITAQRPLSFFAYGIGVLDGMPMPDTHSALLDWYESLGLPVNRERAVVHGAEGLLDFFRKVGEKRESLPYDIDGVVYKVNRRDEQERLGFVSRAPRFALAHKFPAQEALTKLVAIDVQVGRTGAITPVARLEPVFVGGATVTNATLHNEDEVRRKDIRIGDTVIVRRAGDVIPEVVGALLDRRPADAAEFVMPTECPVCGSKIERLPDEAIARCTGGLFCPAQRKQALWHFAQRRALDIDGLGEKIIDQLVELNLVRTPADLFNLGFATLAELDRFAEKSAQNLIDSLEKAKHTTLARFIYGLGIRHVGESTAKDLAKHFGSLTPIMDASIEELLEVNDVGPIVAESLHQFFAEEHNRTVIEQLRAPGKVTWPEGPPAPKAPQGVLAGKTVVLTGTLPNLTRDAAKEMLEAAGAKVAGSVSKKTDYVVAGAEAGSKLAKAEELGIPVLDEDGLHQLLEGNTP.

Residues 41–45, 90–91, and E130 each bind NAD(+); these read DAEYD and SL. K132 acts as the N6-AMP-lysine intermediate in catalysis. NAD(+) is bound by residues R153, E190, K307, and K331. The Zn(2+) site is built by C425, C428, C443, and C449. A BRCT domain is found at 610–691; sequence APQGVLAGKT…LHQLLEGNTP (82 aa).

This sequence belongs to the NAD-dependent DNA ligase family. LigA subfamily. Mg(2+) is required as a cofactor. The cofactor is Mn(2+).

It catalyses the reaction NAD(+) + (deoxyribonucleotide)n-3'-hydroxyl + 5'-phospho-(deoxyribonucleotide)m = (deoxyribonucleotide)n+m + AMP + beta-nicotinamide D-nucleotide.. Functionally, DNA ligase that catalyzes the formation of phosphodiester linkages between 5'-phosphoryl and 3'-hydroxyl groups in double-stranded DNA using NAD as a coenzyme and as the energy source for the reaction. It is essential for DNA replication and repair of damaged DNA. This chain is DNA ligase, found in Burkholderia cenocepacia (strain HI2424).